Reading from the N-terminus, the 242-residue chain is Uridylate kinase (242 aa).

16–19 (KVSG) contacts ATP. G58 is a UMP binding site. ATP contacts are provided by G59 and R63. UMP contacts are provided by residues D78 and 139–146 (TGNPFCTT). Positions 166, 167, 172, and 175 each coordinate ATP.

The protein belongs to the UMP kinase family. Homohexamer.

The protein localises to the cytoplasm. The catalysed reaction is UMP + ATP = UDP + ADP. It participates in pyrimidine metabolism; CTP biosynthesis via de novo pathway; UDP from UMP (UMPK route): step 1/1. Its activity is regulated as follows. Inhibited by UTP. Functionally, catalyzes the reversible phosphorylation of UMP to UDP. The sequence is that of Uridylate kinase from Rickettsia prowazekii (strain Madrid E).